A 147-amino-acid polypeptide reads, in one-letter code: D-aminoacyl-tRNA deacylase (147 aa).

The short motif at G137 to P138 is the Gly-cisPro motif, important for rejection of L-amino acids element.

The protein belongs to the DTD family. Homodimer.

It is found in the cytoplasm. The catalysed reaction is glycyl-tRNA(Ala) + H2O = tRNA(Ala) + glycine + H(+). The enzyme catalyses a D-aminoacyl-tRNA + H2O = a tRNA + a D-alpha-amino acid + H(+). Its function is as follows. An aminoacyl-tRNA editing enzyme that deacylates mischarged D-aminoacyl-tRNAs. Also deacylates mischarged glycyl-tRNA(Ala), protecting cells against glycine mischarging by AlaRS. Acts via tRNA-based rather than protein-based catalysis; rejects L-amino acids rather than detecting D-amino acids in the active site. By recycling D-aminoacyl-tRNA to D-amino acids and free tRNA molecules, this enzyme counteracts the toxicity associated with the formation of D-aminoacyl-tRNA entities in vivo and helps enforce protein L-homochirality. The protein is D-aminoacyl-tRNA deacylase of Acinetobacter baumannii (strain ATCC 17978 / DSM 105126 / CIP 53.77 / LMG 1025 / NCDC KC755 / 5377).